The chain runs to 179 residues: MKKSVLTAFITVVCATSSVMAADDNAITDGSVTFNGKVIAPACTLVAATKDSVVTLPDVSATKLQTNGQVSGVQTDVPIELKDCDTTVTKNATFTFNGTADTTQITAFANQASSDAATNVALQMYMNDGTTAIKPDTETGNILLQDGDQTLTFKVDYIATGKATSGNVNAVTNFHINYY.

Residues 1 to 21 form the signal peptide; sequence MKKSVLTAFITVVCATSSVMA.

It belongs to the fimbrial protein family.

The protein localises to the fimbrium. Functionally, part of the elfADCG fimbrial operon, which could be required for adherence to host epithelial cells. ElfA is an accessory colonization factor that contributes to adherence of bacteria to human intestinal epithelial cells and to animal intestinal tissue in vitro. Binds specifically to laminin, but not to fibronectin or collagen type IV. This chain is Laminin-binding fimbrial subunit ElfA (elfA), found in Escherichia coli O157:H7.